The following is a 267-amino-acid chain: tRNA-cytidine(32) 2-sulfurtransferase (267 aa).

Positions 37-42 (SGGKDS) match the PP-loop motif motif. [4Fe-4S] cluster is bound by residues C112, C115, and C203.

Belongs to the TtcA family. In terms of assembly, homodimer. Mg(2+) serves as cofactor. It depends on [4Fe-4S] cluster as a cofactor.

It localises to the cytoplasm. It carries out the reaction cytidine(32) in tRNA + S-sulfanyl-L-cysteinyl-[cysteine desulfurase] + AH2 + ATP = 2-thiocytidine(32) in tRNA + L-cysteinyl-[cysteine desulfurase] + A + AMP + diphosphate + H(+). The protein operates within tRNA modification. Functionally, catalyzes the ATP-dependent 2-thiolation of cytidine in position 32 of tRNA, to form 2-thiocytidine (s(2)C32). The sulfur atoms are provided by the cysteine/cysteine desulfurase (IscS) system. The protein is tRNA-cytidine(32) 2-sulfurtransferase of Dichelobacter nodosus (strain VCS1703A).